Consider the following 132-residue polypeptide: Histone H2A (132 aa).

Positions 1 to 10 (MTGGKSGGKA) are enriched in gly residues. Residues 1 to 24 (MTGGKSGGKASGSKNAQSRSSKAG) form a disordered region. N6-acetyllysine is present on residues Lys-5 and Lys-9. Position 106 is an N5-methylglutamine (Gln-106). Phosphoserine is present on Ser-129. Positions 129 to 130 (SQ) match the [ST]-Q motif motif.

The protein belongs to the histone H2A family. The nucleosome is a histone octamer containing two molecules each of H2A, H2B, H3 and H4 assembled in one H3-H4 heterotetramer and two H2A-H2B heterodimers. The octamer wraps approximately 147 bp of DNA. Post-translationally, phosphorylated to form H2AS128ph (gamma-H2A) in response to DNA double-strand breaks (DSBs) generated by exogenous genotoxic agents and by stalled replication forks. Phosphorylation is dependent on the DNA damage checkpoint kinases mec1/ATR and tel1/ATM, spreads on either side of a detected DSB site and may mark the surrounding chromatin for recruitment of proteins required for DNA damage signaling and repair. Gamma-H2A is removed from the DNA prior to the strand invasion-primer extension step of the repair process and subsequently dephosphorylated. Dephosphorylation is necessary for efficient recovery from the DNA damage checkpoint. In terms of processing, acetylated by esa1 to form H2AK4ac and H2AK7ac.

It is found in the nucleus. The protein localises to the chromosome. Core component of nucleosome which plays a central role in DNA double strand break (DSB) repair. Nucleosomes wrap and compact DNA into chromatin, limiting DNA accessibility to the cellular machineries which require DNA as a template. Histones thereby play a central role in transcription regulation, DNA repair, DNA replication and chromosomal stability. DNA accessibility is regulated via a complex set of post-translational modifications of histones, also called histone code, and nucleosome remodeling. In Emericella nidulans (strain FGSC A4 / ATCC 38163 / CBS 112.46 / NRRL 194 / M139) (Aspergillus nidulans), this protein is Histone H2A (htaA).